Here is a 154-residue protein sequence, read N- to C-terminus: Small heat shock protein IbpB (154 aa).

One can recognise a sHSP domain in the interval 26–137 (GQEPQGFPPY…QPQRIAIGSA (112 aa)).

It belongs to the small heat shock protein (HSP20) family. Homodimer. Forms homomultimers of about 100-150 subunits at optimal growth temperatures. Conformation changes to oligomers at high temperatures or high ionic concentrations. The decrease in size of the multimers is accompanied by an increase in chaperone activity.

The protein localises to the cytoplasm. In terms of biological role, associates with aggregated proteins, together with IbpA, to stabilize and protect them from irreversible denaturation and extensive proteolysis during heat shock and oxidative stress. Aggregated proteins bound to the IbpAB complex are more efficiently refolded and reactivated by the ATP-dependent chaperone systems ClpB and DnaK/DnaJ/GrpE. Its activity is ATP-independent. This is Small heat shock protein IbpB from Yersinia pseudotuberculosis serotype O:1b (strain IP 31758).